Here is a 346-residue protein sequence, read N- to C-terminus: Haptoglobin-related protein (346 aa).

The segment at residues 1–16 (DLGAVIYLLLWGRQLF) is a signal peptide (not cleaved). A Sushi domain is found at 32–85 (FPKPPEIANGYVEHLFRYQRKNYYRLRTEGDGVYTLNDKKQWINKAVGDKLPEC). The Peptidase S1 domain maps to 102 to 344 (ILGGHLDAKG…IHVWVQKTIA (243 aa)). Cystine bridges form between Cys-249–Cys-280 and Cys-291–Cys-321.

This sequence belongs to the peptidase S1 family.

The protein resides in the secreted. Its function is as follows. Primate-specific plasma protein associated with apolipoprotein L-I (apoL-I)-containing high-density lipoprotein (HDL). Binds hemoglobin with high affinity and may contribute to the clearance of cell-free hemoglobin to allow hepatic recycling of heme iron. This Pan troglodytes (Chimpanzee) protein is Haptoglobin-related protein (HPR).